Here is a 384-residue protein sequence, read N- to C-terminus: Homoserine O-succinyltransferase (384 aa).

Residues 51-361 enclose the AB hydrolase-1 domain; the sequence is NAILICHALS…ETSQGHDAFL (311 aa). The Nucleophile role is filled by Ser157. Position 227 (Arg227) interacts with substrate. Residues Asp324 and His357 contribute to the active site. Asp358 provides a ligand contact to substrate.

This sequence belongs to the AB hydrolase superfamily. MetX family. Homodimer.

It localises to the cytoplasm. The catalysed reaction is L-homoserine + succinyl-CoA = O-succinyl-L-homoserine + CoA. Its pathway is amino-acid biosynthesis; L-methionine biosynthesis via de novo pathway; O-succinyl-L-homoserine from L-homoserine: step 1/1. Its function is as follows. Transfers a succinyl group from succinyl-CoA to L-homoserine, forming succinyl-L-homoserine. The protein is Homoserine O-succinyltransferase of Alkalilimnicola ehrlichii (strain ATCC BAA-1101 / DSM 17681 / MLHE-1).